Here is a 427-residue protein sequence, read N- to C-terminus: Trigger factor (427 aa).

Residues 163-248 (GDTVVIDFVG…IHEVKAKEVP (86 aa)) form the PPIase FKBP-type domain.

It belongs to the FKBP-type PPIase family. Tig subfamily.

It localises to the cytoplasm. The catalysed reaction is [protein]-peptidylproline (omega=180) = [protein]-peptidylproline (omega=0). Involved in protein export. Acts as a chaperone by maintaining the newly synthesized protein in an open conformation. Functions as a peptidyl-prolyl cis-trans isomerase. In Streptococcus pneumoniae (strain CGSP14), this protein is Trigger factor.